A 373-amino-acid polypeptide reads, in one-letter code: sn-glycerol-3-phosphate import ATP-binding protein UgpC 2 (373 aa).

One can recognise an ABC transporter domain in the interval 4 to 234 (IDIRQVRKSY…PASTFVASFI (231 aa)). 36-43 (GPSGCGKS) is a binding site for ATP.

This sequence belongs to the ABC transporter superfamily. sn-glycerol-3-phosphate importer (TC 3.A.1.1.3) family. As to quaternary structure, the complex is composed of two ATP-binding proteins (UgpC), two transmembrane proteins (UgpA and UgpE) and a solute-binding protein (UgpB).

It is found in the cell inner membrane. It catalyses the reaction sn-glycerol 3-phosphate(out) + ATP + H2O = sn-glycerol 3-phosphate(in) + ADP + phosphate + H(+). Part of the ABC transporter complex UgpBAEC involved in sn-glycerol-3-phosphate (G3P) import. Responsible for energy coupling to the transport system. In Agrobacterium fabrum (strain C58 / ATCC 33970) (Agrobacterium tumefaciens (strain C58)), this protein is sn-glycerol-3-phosphate import ATP-binding protein UgpC 2.